We begin with the raw amino-acid sequence, 573 residues long: NADP-dependent malic enzyme, chloroplastic (573 aa).

Catalysis depends on Tyr-123, which acts as the Proton donor. An NAD(+)-binding site is contributed by Arg-176. Residue Lys-194 is the Proton acceptor of the active site. Glu-265, Asp-266, and Asp-289 together coordinate a divalent metal cation. Asp-289 serves as a coordination point for NAD(+). 318-334 is an NADP(+) binding site; the sequence is LFLGAGEAGTGIAELIA. Asn-430 is an NAD(+) binding site.

The protein belongs to the malic enzymes family. As to quaternary structure, homotetramer. Mg(2+) serves as cofactor. Mn(2+) is required as a cofactor.

It localises to the plastid. It is found in the chloroplast. It catalyses the reaction (S)-malate + NADP(+) = pyruvate + CO2 + NADPH. It carries out the reaction oxaloacetate + H(+) = pyruvate + CO2. The protein operates within photosynthesis; C4 acid pathway. The chloroplastic ME isoform decarboxylates malate shuttled from neighboring mesophyll cells. The CO(2) released is then refixed by ribulose-bisphosphate carboxylase. This pathway eliminates the photorespiratory loss of CO(2) that occurs in most plants. This chain is NADP-dependent malic enzyme, chloroplastic, found in Solanum lycopersicum (Tomato).